A 1001-amino-acid chain; its full sequence is DNA topoisomerase 3-alpha (1001 aa).

The Toprim domain maps to 35-179; that stretch reads KVLCVAEKND…NLQVLRARFS (145 aa). The Topo IA-type catalytic domain maps to 197–617; that stretch reads DQRVSDAVDV…QQVQKYKQVF (421 aa). The active-site O-(5'-phospho-DNA)-tyrosine intermediate is the tyrosine 362. The segment at 400–424 is disordered; it reads GGPTPRNGNKSDQAHPPIHPTKYTN. The C4-type zinc finger occupies 658-685; the sequence is CPQCNKDMVLKTKKNGGFYLSCMGFPEC. Residues 774 to 792 are compositionally biased toward polar residues; that stretch reads RMDNSQHPQPADSRQTGSS. A disordered region spans residues 774 to 810; sequence RMDNSQHPQPADSRQTGSSKALAQTLPPPTAAGESNS. Zn(2+) is bound by residues cysteine 813, cysteine 815, cysteine 838, cysteine 843, cysteine 897, cysteine 899, cysteine 922, and cysteine 930. 2 consecutive GRF-type zinc fingers follow at residues 813–852 and 897–939; these read CNCG…ADSP and CLCS…VDEN. The disordered stretch occupies residues 937 to 1001; sequence DENTAPGTSG…HTRPFCPQNR (65 aa). Residues 953–964 show a composition bias toward basic and acidic residues; sequence DRGRTLESEARS.

It belongs to the type IA topoisomerase family. In terms of assembly, binds ssDNA. Interacts (via N-terminal region) with BLM; the interaction is direct. Directly interacts with RMI1. Component of the RMI complex, containing at least TOP3A, RMI1 and RMI2. The RMI complex interacts with BLM. It depends on Mg(2+) as a cofactor. High expression is found in testis, heart, skeletal muscle and pancreas.

Its subcellular location is the mitochondrion matrix. The enzyme catalyses ATP-independent breakage of single-stranded DNA, followed by passage and rejoining.. Functionally, releases the supercoiling and torsional tension of DNA introduced during the DNA replication and transcription by transiently cleaving and rejoining one strand of the DNA duplex. Introduces a single-strand break via transesterification at a target site in duplex DNA. The scissile phosphodiester is attacked by the catalytic tyrosine of the enzyme, resulting in the formation of a DNA-(5'-phosphotyrosyl)-enzyme intermediate and the expulsion of a 3'-OH DNA strand. The free DNA strand then undergoes passage around the unbroken strand thus removing DNA supercoils. Finally, in the religation step, the DNA 3'-OH attacks the covalent intermediate to expel the active-site tyrosine and restore the DNA phosphodiester backbone. As an essential component of the RMI complex it is involved in chromosome separation and the processing of homologous recombination intermediates to limit DNA crossover formation in cells. Has DNA decatenation activity. It is required for mtDNA decatenation and segregation after completion of replication, in a process that does not require BLM, RMI1 and RMI2. This is DNA topoisomerase 3-alpha (TOP3A) from Homo sapiens (Human).